A 180-amino-acid polypeptide reads, in one-letter code: Segregation and condensation protein B (180 aa).

The protein belongs to the ScpB family. As to quaternary structure, homodimer. Homodimerization may be required to stabilize the binding of ScpA to the Smc head domains. Component of a cohesin-like complex composed of ScpA, ScpB and the Smc homodimer, in which ScpA and ScpB bind to the head domain of Smc. The presence of the three proteins is required for the association of the complex with DNA.

The protein resides in the cytoplasm. Participates in chromosomal partition during cell division. May act via the formation of a condensin-like complex containing Smc and ScpA that pull DNA away from mid-cell into both cell halves. This is Segregation and condensation protein B from Staphylococcus epidermidis (strain ATCC 35984 / DSM 28319 / BCRC 17069 / CCUG 31568 / BM 3577 / RP62A).